Consider the following 125-residue polypeptide: Oxytocin-neurophysin 1 (125 aa).

A signal peptide spans 1 to 19; the sequence is MAGPSLACCLLGLLALTSA. Cysteine 20 and cysteine 25 form a disulfide bridge. At glycine 28 the chain carries Glycine amide. 7 disulfides stabilise this stretch: cysteine 41–cysteine 85, cysteine 44–cysteine 58, cysteine 52–cysteine 75, cysteine 59–cysteine 65, cysteine 92–cysteine 104, cysteine 98–cysteine 116, and cysteine 105–cysteine 110.

This sequence belongs to the vasopressin/oxytocin family. In terms of assembly, interacts with oxytocin receptor (Ki=1.5 nM). Interacts with vasopressin V1aR/AVPR1A (Ki=37 nM), V1bR/AVPR1B (Ki=222 nM) and V2R/AVPR2 receptors (Ki=823 nM).

The protein localises to the secreted. Functionally, neurophysin 1 specifically binds oxytocin. In terms of biological role, oxytocin causes contraction of the smooth muscle of the uterus and of the mammary gland. Acts by binding to oxytocin receptor (OXTR). The protein is Oxytocin-neurophysin 1 (OXT) of Homo sapiens (Human).